A 230-amino-acid polypeptide reads, in one-letter code: Orotidine 5'-phosphate decarboxylase (230 aa).

Residues aspartate 11, lysine 34, 61–70 (DLKLHDIPNT), threonine 117, arginine 179, glutamine 188, glycine 208, and arginine 209 contribute to the substrate site. Catalysis depends on lysine 63, which acts as the Proton donor.

This sequence belongs to the OMP decarboxylase family. Type 1 subfamily. Homodimer.

It catalyses the reaction orotidine 5'-phosphate + H(+) = UMP + CO2. The protein operates within pyrimidine metabolism; UMP biosynthesis via de novo pathway; UMP from orotate: step 2/2. Functionally, catalyzes the decarboxylation of orotidine 5'-monophosphate (OMP) to uridine 5'-monophosphate (UMP). This is Orotidine 5'-phosphate decarboxylase from Streptococcus equi subsp. zooepidemicus (strain MGCS10565).